The chain runs to 212 residues: MAGPGPGPGDPDEQYDFLFKLVLVGDASVGKTCVVQRFKTGAFSERQGSTIGVDFTMKTLEIQGKRVKLQIWDTAGQERFRTITQSYYRSANGAILAYDITKRSSFLSVPHWIEDVRKYAGSNIVQLLIGNKSDLSELREVSLAEAQSLAEHYDILCAIETSAKDSSNVEEAFLRVATELIMRHGGPLFSEKSPDHIQLNSKDIGEGWGCGC.

25 to 32 (GDASVGKT) contributes to the GTP binding site. The Effector region signature appears at 47 to 55 (QGSTIGVDF). Phosphoserine is present on serine 49. 73 to 77 (DTAGQ) lines the GTP pocket. Threonine 82 bears the Phosphothreonine; by LRRK2 mark. GTP-binding positions include 131–134 (NKSD) and 163–164 (AK). Residue serine 193 is modified to Phosphoserine. Residues cysteine 210 and cysteine 212 are each lipidated (S-geranylgeranyl cysteine). The residue at position 212 (cysteine 212) is a Cysteine methyl ester.

Belongs to the small GTPase superfamily. Rab family. Interacts with GDI1, GDI2, CHM and CHML; phosphorylation at Thr-82 disrupts these interactions. In terms of tissue distribution, widely expressed in brain, testis, lung, heart, ovary, colon, kidney, uterus and spleen but not in liver.

Its subcellular location is the cytoplasmic vesicle. The protein localises to the phagosome. It localises to the phagosome membrane. The protein resides in the golgi apparatus. It is found in the trans-Golgi network membrane. Its subcellular location is the trans-Golgi network. Functionally, the small GTPases Rab are key regulators of intracellular membrane trafficking, from the formation of transport vesicles to their fusion with membranes. Rabs cycle between an inactive GDP-bound form and an active GTP-bound form that is able to recruit to membranes different set of downstream effectors directly responsible for vesicle formation, movement, tethering and fusion. The low intrinsic GTPase activity of RAB43 is activated by USP6NL. Involved in retrograde transport from the endocytic pathway to the Golgi apparatus. Involved in the transport of Shiga toxin from early and recycling endosomes to the trans-Golgi network. Required for the structural integrity of the Golgi complex. Plays a role in the maturation of phagosomes that engulf pathogens, such as S.aureus and M.tuberculosis. The polypeptide is Ras-related protein Rab-43 (RAB43) (Homo sapiens (Human)).